A 272-amino-acid chain; its full sequence is Probable ribonuclease HI_0526 (272 aa).

Residues 1–23 (MKKLTSILSLIVLVILAIWQYFT) form the signal peptide. Residues histidine 148, glutamate 195, and histidine 199 contribute to the active site.

The protein belongs to the RNase T2 family.

This Haemophilus influenzae (strain ATCC 51907 / DSM 11121 / KW20 / Rd) protein is Probable ribonuclease HI_0526.